Consider the following 157-residue polypeptide: Small ribosomal subunit protein uS7 (157 aa).

This sequence belongs to the universal ribosomal protein uS7 family. As to quaternary structure, part of the 30S ribosomal subunit. Contacts proteins S9 and S11.

In terms of biological role, one of the primary rRNA binding proteins, it binds directly to 16S rRNA where it nucleates assembly of the head domain of the 30S subunit. Is located at the subunit interface close to the decoding center, probably blocks exit of the E-site tRNA. This is Small ribosomal subunit protein uS7 from Protochlamydia amoebophila (strain UWE25).